Here is a 605-residue protein sequence, read N- to C-terminus: Aspartate--tRNA(Asp/Asn) ligase (605 aa).

Glu-178 lines the L-aspartate pocket. The tract at residues 202–205 is aspartate; sequence QLFK. Arg-224 provides a ligand contact to L-aspartate. Residues 224 to 226 and Gln-233 each bind ATP; that span reads RDE. Residue His-458 coordinates L-aspartate. Glu-488 contacts ATP. Residue Arg-495 participates in L-aspartate binding. 540–543 contributes to the ATP binding site; it reads GLDR. Residues 580–605 are disordered; it reads QQLKELHVTPAKPAKTTAKTKPRPAD.

This sequence belongs to the class-II aminoacyl-tRNA synthetase family. Type 1 subfamily. As to quaternary structure, homodimer.

It localises to the cytoplasm. It catalyses the reaction tRNA(Asx) + L-aspartate + ATP = L-aspartyl-tRNA(Asx) + AMP + diphosphate. Functionally, aspartyl-tRNA synthetase with relaxed tRNA specificity since it is able to aspartylate not only its cognate tRNA(Asp) but also tRNA(Asn). Reaction proceeds in two steps: L-aspartate is first activated by ATP to form Asp-AMP and then transferred to the acceptor end of tRNA(Asp/Asn). The chain is Aspartate--tRNA(Asp/Asn) ligase from Thermosynechococcus vestitus (strain NIES-2133 / IAM M-273 / BP-1).